Here is a 95-residue protein sequence, read N- to C-terminus: Co-chaperonin GroES (95 aa).

Belongs to the GroES chaperonin family. In terms of assembly, heptamer of 7 subunits arranged in a ring. Interacts with the chaperonin GroEL.

It localises to the cytoplasm. Together with the chaperonin GroEL, plays an essential role in assisting protein folding. The GroEL-GroES system forms a nano-cage that allows encapsulation of the non-native substrate proteins and provides a physical environment optimized to promote and accelerate protein folding. GroES binds to the apical surface of the GroEL ring, thereby capping the opening of the GroEL channel. The sequence is that of Co-chaperonin GroES from Chlorobium phaeobacteroides (strain BS1).